The primary structure comprises 271 residues: ATP synthase subunit a (271 aa).

Transmembrane regions (helical) follow at residues 38-58 (FWTL…LFLA), 100-120 (LIAP…LMDL), 146-166 (DVNI…FYSI), 220-240 (LIFI…LNVP), and 242-262 (AIFH…LTIV).

It belongs to the ATPase A chain family. F-type ATPases have 2 components, CF(1) - the catalytic core - and CF(0) - the membrane proton channel. CF(1) has five subunits: alpha(3), beta(3), gamma(1), delta(1), epsilon(1). CF(0) has three main subunits: a(1), b(2) and c(9-12). The alpha and beta chains form an alternating ring which encloses part of the gamma chain. CF(1) is attached to CF(0) by a central stalk formed by the gamma and epsilon chains, while a peripheral stalk is formed by the delta and b chains.

Its subcellular location is the cell inner membrane. Its function is as follows. Key component of the proton channel; it plays a direct role in the translocation of protons across the membrane. This chain is ATP synthase subunit a, found in Enterobacter sp. (strain 638).